The following is a 278-amino-acid chain: Biotin synthase (278 aa).

The Radical SAM core domain occupies 1 to 227 (MQIMLCAISN…QSVVMVAGGR (227 aa)). Residues Cys-16, Cys-20, and Cys-23 each coordinate [4Fe-4S] cluster. [2Fe-2S] cluster is bound by residues Cys-60, Asn-96, and Cys-154.

Belongs to the radical SAM superfamily. Biotin synthase family. In terms of assembly, homodimer. [4Fe-4S] cluster serves as cofactor. It depends on [2Fe-2S] cluster as a cofactor.

The enzyme catalyses (4R,5S)-dethiobiotin + (sulfur carrier)-SH + 2 reduced [2Fe-2S]-[ferredoxin] + 2 S-adenosyl-L-methionine = (sulfur carrier)-H + biotin + 2 5'-deoxyadenosine + 2 L-methionine + 2 oxidized [2Fe-2S]-[ferredoxin]. The protein operates within cofactor biosynthesis; biotin biosynthesis; biotin from 7,8-diaminononanoate: step 2/2. Functionally, catalyzes the conversion of dethiobiotin (DTB) to biotin by the insertion of a sulfur atom into dethiobiotin via a radical-based mechanism. This Campylobacter jejuni subsp. jejuni serotype O:2 (strain ATCC 700819 / NCTC 11168) protein is Biotin synthase.